Reading from the N-terminus, the 464-residue chain is Isthmin-1 (464 aa).

The signal sequence occupies residues 1–29; sequence MVRLAAELLLLLGLLLLTLHITVLRGSGA. Residue Asn-39 is glycosylated (N-linked (GlcNAc...) asparagine). Disordered regions lie at residues 50–98, 135–155, and 173–219; these read NVGS…LQRD, PDSEADKDQHPENKPSWSVPS, and SGDQ…STDG. Residues 51–63 show a composition bias toward polar residues; that stretch reads VGSDTTSETSFSL. 2 stretches are compositionally biased toward basic and acidic residues: residues 66–76 and 138–147; these read EAPREHLDHQA and EADKDQHPEN. Residues 218 to 262 form the TSP type-1 domain; that stretch reads DGEGDWSLWSVCSVTCGNGNQKRTRSCGYACTATESRTCDRPNCP. 3 disulfides stabilise this stretch: Cys-229-Cys-256, Cys-233-Cys-261, and Cys-244-Cys-248. In terms of domain architecture, AMOP spans 289–452; sequence LFEVDTDSCE…QKCTESPSDE (164 aa).

Belongs to the isthmin family. As to quaternary structure, interacts with integrin ITGAV/ITGB5.

The protein resides in the secreted. Acts as an angiogenesis inhibitor. In Homo sapiens (Human), this protein is Isthmin-1 (ISM1).